The chain runs to 253 residues: Imidazole glycerol phosphate synthase subunit HisF (253 aa).

Residues aspartate 11 and aspartate 130 contribute to the active site.

The protein belongs to the HisA/HisF family. Heterodimer of HisH and HisF.

The protein localises to the cytoplasm. It carries out the reaction 5-[(5-phospho-1-deoxy-D-ribulos-1-ylimino)methylamino]-1-(5-phospho-beta-D-ribosyl)imidazole-4-carboxamide + L-glutamine = D-erythro-1-(imidazol-4-yl)glycerol 3-phosphate + 5-amino-1-(5-phospho-beta-D-ribosyl)imidazole-4-carboxamide + L-glutamate + H(+). The protein operates within amino-acid biosynthesis; L-histidine biosynthesis; L-histidine from 5-phospho-alpha-D-ribose 1-diphosphate: step 5/9. In terms of biological role, IGPS catalyzes the conversion of PRFAR and glutamine to IGP, AICAR and glutamate. The HisF subunit catalyzes the cyclization activity that produces IGP and AICAR from PRFAR using the ammonia provided by the HisH subunit. In Ruegeria sp. (strain TM1040) (Silicibacter sp.), this protein is Imidazole glycerol phosphate synthase subunit HisF.